A 484-amino-acid polypeptide reads, in one-letter code: Solute carrier family 40 member 1 (484 aa).

11 consecutive transmembrane segments (helical) span residues 58 to 78 (LLTA…GPIV), 94 to 114 (WLLL…ALLV), 123 to 143 (GFPA…LAAL), 189 to 209 (VLSG…ALAA), 212 to 232 (LAAV…FPAL), 279 to 299 (VVLP…FGTL), 308 to 328 (GIPA…GIAA), 346 to 366 (LWSI…VWAG), 377 to 397 (LMGG…AVMQ), 413 to 433 (GVQN…GIIV), and 442 to 462 (LIVL…MHVY).

This sequence belongs to the ferroportin (FP) (TC 2.A.100) family. SLC40A subfamily.

The protein resides in the membrane. Its function is as follows. May be involved in iron transport and iron homeostasis. This is Solute carrier family 40 member 1 from Oryza sativa subsp. japonica (Rice).